Reading from the N-terminus, the 517-residue chain is GMP synthase [glutamine-hydrolyzing] (517 aa).

In terms of domain architecture, Glutamine amidotransferase type-1 spans 11–202; the sequence is KIIVLDYGSQ…AFGVCGAQDN (192 aa). Cys-88 acts as the Nucleophile in catalysis. Catalysis depends on residues His-176 and Glu-178. The GMPS ATP-PPase domain occupies 203 to 392; it reads WTMNDFIDMQ…LGMPYELVWR (190 aa). Residue 230 to 236 coordinates ATP; that stretch reads SGGVDSS.

Homodimer.

It carries out the reaction XMP + L-glutamine + ATP + H2O = GMP + L-glutamate + AMP + diphosphate + 2 H(+). Its pathway is purine metabolism; GMP biosynthesis; GMP from XMP (L-Gln route): step 1/1. Catalyzes the synthesis of GMP from XMP. This chain is GMP synthase [glutamine-hydrolyzing], found in Latilactobacillus sakei subsp. sakei (strain 23K) (Lactobacillus sakei subsp. sakei).